Consider the following 73-residue polypeptide: Large ribosomal subunit protein bL31 (73 aa).

Residues Cys-16, Cys-18, Cys-38, and Cys-41 each contribute to the Zn(2+) site.

Belongs to the bacterial ribosomal protein bL31 family. Type A subfamily. Part of the 50S ribosomal subunit. Zn(2+) is required as a cofactor.

Its function is as follows. Binds the 23S rRNA. The chain is Large ribosomal subunit protein bL31 from Vibrio parahaemolyticus serotype O3:K6 (strain RIMD 2210633).